The following is a 217-amino-acid chain: Probable transaldolase (217 aa).

Residue Lys-83 is the Schiff-base intermediate with substrate of the active site.

Belongs to the transaldolase family. Type 3B subfamily.

Its subcellular location is the cytoplasm. The catalysed reaction is D-sedoheptulose 7-phosphate + D-glyceraldehyde 3-phosphate = D-erythrose 4-phosphate + beta-D-fructose 6-phosphate. Its pathway is carbohydrate degradation; pentose phosphate pathway; D-glyceraldehyde 3-phosphate and beta-D-fructose 6-phosphate from D-ribose 5-phosphate and D-xylulose 5-phosphate (non-oxidative stage): step 2/3. Functionally, transaldolase is important for the balance of metabolites in the pentose-phosphate pathway. This is Probable transaldolase from Caulobacter vibrioides (strain NA1000 / CB15N) (Caulobacter crescentus).